A 102-amino-acid polypeptide reads, in one-letter code: Small ribosomal subunit protein uS10 (102 aa).

It belongs to the universal ribosomal protein uS10 family. In terms of assembly, part of the 30S ribosomal subunit.

In terms of biological role, involved in the binding of tRNA to the ribosomes. The polypeptide is Small ribosomal subunit protein uS10 (Paramagnetospirillum magneticum (strain ATCC 700264 / AMB-1) (Magnetospirillum magneticum)).